A 134-amino-acid chain; its full sequence is Large ribosomal subunit protein uL16c (134 aa).

The protein belongs to the universal ribosomal protein uL16 family. Part of the 50S ribosomal subunit.

It localises to the plastid. The protein localises to the chloroplast. The polypeptide is Large ribosomal subunit protein uL16c (Gnetum parvifolium (Small-leaved jointfir)).